The following is a 304-amino-acid chain: UDP-N-acetylenolpyruvoylglucosamine reductase (304 aa).

In terms of domain architecture, FAD-binding PCMH-type spans 31 to 196; it reads KVGGPADYLA…ISAKFNLKPG (166 aa). Arginine 175 is an active-site residue. Residue serine 225 is the Proton donor of the active site. Glutamate 295 is an active-site residue.

The protein belongs to the MurB family. FAD is required as a cofactor.

It localises to the cytoplasm. The enzyme catalyses UDP-N-acetyl-alpha-D-muramate + NADP(+) = UDP-N-acetyl-3-O-(1-carboxyvinyl)-alpha-D-glucosamine + NADPH + H(+). The protein operates within cell wall biogenesis; peptidoglycan biosynthesis. Its function is as follows. Cell wall formation. This Streptococcus thermophilus (strain CNRZ 1066) protein is UDP-N-acetylenolpyruvoylglucosamine reductase.